The following is a 246-amino-acid chain: Isoprenyl transferase 1 (246 aa).

Asp-19 is a catalytic residue. Asp-19 serves as a coordination point for Mg(2+). Substrate contacts are provided by residues 20–23 (GNGR), Trp-24, Arg-32, His-36, and 64–66 (STD). Residue Asn-67 is the Proton acceptor of the active site. Residues Trp-68, Arg-70, Arg-180, and 186 to 188 (RLS) each bind substrate. Mg(2+) is bound at residue Glu-199.

This sequence belongs to the UPP synthase family. In terms of assembly, homodimer. Requires Mg(2+) as cofactor.

In terms of biological role, catalyzes the condensation of isopentenyl diphosphate (IPP) with allylic pyrophosphates generating different type of terpenoids. The sequence is that of Isoprenyl transferase 1 from Bradyrhizobium diazoefficiens (strain JCM 10833 / BCRC 13528 / IAM 13628 / NBRC 14792 / USDA 110).